The chain runs to 707 residues: Ribosomal RNA large subunit methyltransferase K/L (707 aa).

The region spanning 44 to 155 (VIYNLCLWSR…NDILTVSFDL (112 aa)) is the THUMP domain.

It belongs to the methyltransferase superfamily. RlmKL family.

It is found in the cytoplasm. The enzyme catalyses guanosine(2445) in 23S rRNA + S-adenosyl-L-methionine = N(2)-methylguanosine(2445) in 23S rRNA + S-adenosyl-L-homocysteine + H(+). The catalysed reaction is guanosine(2069) in 23S rRNA + S-adenosyl-L-methionine = N(2)-methylguanosine(2069) in 23S rRNA + S-adenosyl-L-homocysteine + H(+). In terms of biological role, specifically methylates the guanine in position 2445 (m2G2445) and the guanine in position 2069 (m7G2069) of 23S rRNA. This chain is Ribosomal RNA large subunit methyltransferase K/L, found in Legionella pneumophila (strain Lens).